The chain runs to 308 residues: Serine/threonine-protein phosphatase 4 catalytic subunit (308 aa).

Mn(2+)-binding residues include aspartate 51, histidine 53, aspartate 79, and asparagine 111. Histidine 112 functions as the Proton donor in the catalytic mechanism. Residues histidine 161 and histidine 235 each contribute to the Mn(2+) site.

This sequence belongs to the PPP phosphatase family. PP-4 (PP-X) subfamily. In terms of assembly, catalytic subunit of the histone H2A phosphatase complex (HTP-C) containing PPH3, PSY2 and PSY4. Inactivated in a complex with phosphatase methylesterase PPE1 (PP2Ai). Interacts with phosphatase 2A activator RRD1, which can reactivate PP2Ai by dissociating the catalytic subunit from the complex. Interacts with SPT5 and TAP42. Mn(2+) serves as cofactor. In terms of processing, reversibly methyl esterified on Leu-308 by leucine carboxyl methyltransferase 1 (PPM1) and protein phosphatase methylesterase 1 (PPE1). Carboxyl methylation influences the affinity of the catalytic subunit for the different regulatory subunits, thereby modulating the PP2A holoenzyme's substrate specificity, enzyme activity and cellular localization.

The protein localises to the cytoplasm. It localises to the nucleus. The catalysed reaction is O-phospho-L-seryl-[protein] + H2O = L-seryl-[protein] + phosphate. It catalyses the reaction O-phospho-L-threonyl-[protein] + H2O = L-threonyl-[protein] + phosphate. In terms of biological role, forms the histone H2A phosphatase complex in association with the regulatory subunits PSY2 and PSY4, which dephosphorylates H2AS128ph (gamma-H2A) that has been displaced from sites of DNA lesions in the double-stranded DNA break repair process. Dephosphorylation is necessary for efficient recovery from the DNA damage checkpoint. PPH3 is directly involved in the dephosphorylation and activation of the transcription factor GLN3 in response to nutrient availability. The protein is Serine/threonine-protein phosphatase 4 catalytic subunit (PPH3) of Saccharomyces cerevisiae (strain ATCC 204508 / S288c) (Baker's yeast).